A 440-amino-acid chain; its full sequence is Enolase (440 aa).

Position 163 (Q163) interacts with (2R)-2-phosphoglycerate. Catalysis depends on E205, which acts as the Proton donor. Mg(2+) contacts are provided by D242, E288, and D315. The (2R)-2-phosphoglycerate site is built by K340, R369, S370, and K391. K340 serves as the catalytic Proton acceptor.

This sequence belongs to the enolase family. The cofactor is Mg(2+).

The protein localises to the cytoplasm. It is found in the secreted. It localises to the cell surface. The catalysed reaction is (2R)-2-phosphoglycerate = phosphoenolpyruvate + H2O. Its pathway is carbohydrate degradation; glycolysis; pyruvate from D-glyceraldehyde 3-phosphate: step 4/5. In terms of biological role, catalyzes the reversible conversion of 2-phosphoglycerate (2-PG) into phosphoenolpyruvate (PEP). It is essential for the degradation of carbohydrates via glycolysis. The protein is Enolase of Pediococcus pentosaceus (strain ATCC 25745 / CCUG 21536 / LMG 10740 / 183-1w).